A 310-amino-acid polypeptide reads, in one-letter code: Homeobox protein knotted-1-like 2 (310 aa).

Residues S178–D208 form a disordered region. Over residues S185–A197 the composition is skewed to acidic residues. The 21-residue stretch at D208–F228 folds into the ELK domain. The homeobox; TALE-type DNA-binding region spans S229–S292.

It belongs to the TALE/KNOX homeobox family. In terms of assembly, may form heterodimeric complex with the TALE/BELL protein BEL1, BLH1 and BLH2. Interacts with OFP12 and OFP14. Interacts with BZIP30. In terms of tissue distribution, expressed predominantly in shoot apices of seedlings, in the receptacle and developing pistil of flowers and in axillary buds of inflorescence stems.

It localises to the nucleus. Its function is as follows. May play a role in meristem function, and may be involved in maintaining cells in an undifferentiated, meristematic state. Probably binds to the DNA sequence 5'-TGAC-3'. The sequence is that of Homeobox protein knotted-1-like 2 (KNAT2) from Arabidopsis thaliana (Mouse-ear cress).